The sequence spans 444 residues: Cortexillin-1 (444 aa).

The actin-binding stretch occupies residues 1–227 (MAGKDWEIVQ…VLYTSLFFHA (227 aa)). Calponin-homology (CH) domains lie at 8–115 (IVQE…RKYR) and 124–229 (KSSE…HAYR). Coiled-coil stretches lie at residues 227–352 (AYRA…TRIR) and 410–434 (LATK…DLKA).

It belongs to the cortexillin family. As to quaternary structure, homodimer; parallel.

Its subcellular location is the cytoplasm. The protein resides in the cytoskeleton. Actin-bundling protein. When linked to F-actin the actin filaments form preferentially anti-parallel bundles that associate into meshworks. Plays a major role in cytokinesis. Negatively regulates cortical localization of rapgap1. The sequence is that of Cortexillin-1 (ctxA) from Dictyostelium discoideum (Social amoeba).